A 427-amino-acid polypeptide reads, in one-letter code: Glutamate-1-semialdehyde 2,1-aminomutase (427 aa).

K265 carries the post-translational modification N6-(pyridoxal phosphate)lysine.

It belongs to the class-III pyridoxal-phosphate-dependent aminotransferase family. HemL subfamily. Homodimer. Requires pyridoxal 5'-phosphate as cofactor.

The protein resides in the cytoplasm. It carries out the reaction (S)-4-amino-5-oxopentanoate = 5-aminolevulinate. It participates in porphyrin-containing compound metabolism; protoporphyrin-IX biosynthesis; 5-aminolevulinate from L-glutamyl-tRNA(Glu): step 2/2. The sequence is that of Glutamate-1-semialdehyde 2,1-aminomutase from Burkholderia pseudomallei (strain 1710b).